A 520-amino-acid polypeptide reads, in one-letter code: UDP-N-acetylmuramoyl-L-alanyl-D-glutamate--2,6-diaminopimelate ligase (520 aa).

Leu48 is a binding site for UDP-N-acetyl-alpha-D-muramoyl-L-alanyl-D-glutamate. Position 134 to 140 (134 to 140) interacts with ATP; it reads GTSGKTT. UDP-N-acetyl-alpha-D-muramoyl-L-alanyl-D-glutamate-binding positions include 176–177, Ser203, and Arg211; that span reads TT. At Lys243 the chain carries N6-carboxylysine. Residues Arg405, 429–432, Gly483, and Glu487 each bind meso-2,6-diaminopimelate; that span reads DNPR. Residues 429–432 carry the Meso-diaminopimelate recognition motif motif; the sequence is DNPR.

It belongs to the MurCDEF family. MurE subfamily. Mg(2+) serves as cofactor. In terms of processing, carboxylation is probably crucial for Mg(2+) binding and, consequently, for the gamma-phosphate positioning of ATP.

The protein resides in the cytoplasm. The enzyme catalyses UDP-N-acetyl-alpha-D-muramoyl-L-alanyl-D-glutamate + meso-2,6-diaminopimelate + ATP = UDP-N-acetyl-alpha-D-muramoyl-L-alanyl-gamma-D-glutamyl-meso-2,6-diaminopimelate + ADP + phosphate + H(+). It functions in the pathway cell wall biogenesis; peptidoglycan biosynthesis. Functionally, catalyzes the addition of meso-diaminopimelic acid to the nucleotide precursor UDP-N-acetylmuramoyl-L-alanyl-D-glutamate (UMAG) in the biosynthesis of bacterial cell-wall peptidoglycan. The polypeptide is UDP-N-acetylmuramoyl-L-alanyl-D-glutamate--2,6-diaminopimelate ligase (Mycobacterium avium (strain 104)).